The following is a 548-amino-acid chain: Inosine-5'-monophosphate dehydrogenase (548 aa).

2 consecutive CBS domains span residues 121-201 (FILD…EDPV) and 205-261 (MSTE…PLAS). Residues 298 to 300 (DSS) and 348 to 350 (GMG) each bind NAD(+). 2 residues coordinate K(+): G350 and G352. Position 353 (S353) interacts with IMP. C355 lines the K(+) pocket. Catalysis depends on C355, which acts as the Thioimidate intermediate. IMP contacts are provided by residues 388 to 390 (DGG) and 411 to 412 (GS). R461 (proton acceptor) is an active-site residue. Q473 contacts IMP. The interval 527–548 (ASAQTEGNVHGLHSHEKKLYSS) is disordered. K(+) is bound at residue S528. Over residues 539–548 (HSHEKKLYSS) the composition is skewed to basic and acidic residues.

The protein belongs to the IMPDH/GMPR family. In terms of assembly, homotetramer. K(+) is required as a cofactor.

The protein localises to the cytoplasm. The enzyme catalyses IMP + NAD(+) + H2O = XMP + NADH + H(+). The protein operates within purine metabolism; XMP biosynthesis via de novo pathway; XMP from IMP: step 1/1. Its activity is regulated as follows. Mycophenolic acid (MPA) is a non-competitive inhibitor that prevents formation of the closed enzyme conformation by binding to the same site as the amobile flap. In contrast, mizoribine monophosphate (MZP) is a competitive inhibitor that induces the closed conformation. MPA is a potent inhibitor of mammalian IMPDHs but a poor inhibitor of the bacterial enzymes. MZP is a more potent inhibitor of bacterial IMPDH. In terms of biological role, catalyzes the conversion of inosine 5'-phosphate (IMP) to xanthosine 5'-phosphate (XMP), the first committed and rate-limiting step in the de novo synthesis of guanine nucleotides, and therefore plays an important role in the regulation of cell growth. Part of the gene cluster that mediates the biosynthesis of mycophenolic acid (MPA), the first isolated antibiotic natural product in the world. Does not play a role in the biosynthesis of MPA, but is involved in self resistance to MPA, since MPA acts as an inhibitor of IMP dehydrogenases. The protein is Inosine-5'-monophosphate dehydrogenase of Penicillium brevicompactum.